The following is a 321-amino-acid chain: Beta-1,3-N-acetylglucosaminyltransferase manic fringe (321 aa).

Residues 1–7 lie on the Cytoplasmic side of the membrane; that stretch reads MQCRLPR. The chain crosses the membrane as a helical; Signal-anchor for type II membrane protein span at residues 8 to 27; sequence GLAGALLTLLCMGLLCLRYH. The Lumenal segment spans residues 28 to 321; sequence LNLSPQRVQG…TPWCPQLGAR (294 aa). Arg70 provides a ligand contact to substrate. N-linked (GlcNAc...) asparagine glycosylation occurs at Asn109. 2 cysteine pairs are disulfide-bonded: Cys110/Cys121 and Cys139/Cys202. A substrate-binding site is contributed by Asp143. Position 144 (Asp144) interacts with Mn(2+). N-linked (GlcNAc...) asparagine glycosylation is present at Asn185. Asp232 is an active-site residue. Residue His256 coordinates Mn(2+). Residues Cys306 and Cys315 are joined by a disulfide bond.

Belongs to the glycosyltransferase 31 family. The cofactor is Mn(2+).

It localises to the golgi apparatus membrane. The enzyme catalyses 3-O-(alpha-L-fucosyl)-L-threonyl-[EGF-like domain protein] + UDP-N-acetyl-alpha-D-glucosamine = 3-O-(N-acetyl-beta-D-glucosaminyl-(1-&gt;3)-alpha-L-fucosyl)-L-threonyl-[EGF-like domain protein] + UDP + H(+). It catalyses the reaction 3-O-(alpha-L-fucosyl)-L-seryl-[EGF-like domain protein] + UDP-N-acetyl-alpha-D-glucosamine = 3-O-(N-acetyl-beta-D-glucosaminyl-(1-&gt;3)-alpha-L-fucosyl)-L-seryl-[EGF-like domain protein] + UDP + H(+). Its function is as follows. Glycosyltransferase that initiates the elongation of O-linked fucose residues attached to EGF-like repeats in the extracellular domain of Notch molecules. Modulates NOTCH1 activity by modifying O-fucose residues at specific EGF-like domains resulting in inhibition of NOTCH1 activation by JAG1 and enhancement of NOTCH1 activation by DLL1 via an increase in its binding to DLL1. In Homo sapiens (Human), this protein is Beta-1,3-N-acetylglucosaminyltransferase manic fringe.